Reading from the N-terminus, the 547-residue chain is Chaperonin GroEL (547 aa).

Residues 30 to 33 (TLGP), Lys51, 87 to 91 (DGTTT), Gly415, 479 to 481 (NAA), and Asp495 contribute to the ATP site.

This sequence belongs to the chaperonin (HSP60) family. In terms of assembly, forms a cylinder of 14 subunits composed of two heptameric rings stacked back-to-back. Interacts with the co-chaperonin GroES.

It is found in the cytoplasm. The catalysed reaction is ATP + H2O + a folded polypeptide = ADP + phosphate + an unfolded polypeptide.. Together with its co-chaperonin GroES, plays an essential role in assisting protein folding. The GroEL-GroES system forms a nano-cage that allows encapsulation of the non-native substrate proteins and provides a physical environment optimized to promote and accelerate protein folding. The sequence is that of Chaperonin GroEL from Pseudomonas paraeruginosa (strain DSM 24068 / PA7) (Pseudomonas aeruginosa (strain PA7)).